The sequence spans 595 residues: Inactive metallocarboxypeptidase ecm14 (595 aa).

Positions 1-22 (MYRPDHVFVILCAVFFTGQVTA) are cleaved as a signal peptide. The propeptide occupies 23 to 178 (VPAGTGITHP…MIYESQYPSR (156 aa)). The 322-residue stretch at 206–527 (NYQPFPVILQ…NSVLVLGHFL (322 aa)) folds into the Peptidase M14 domain. 2 residues coordinate Zn(2+): His-270 and Glu-273. Residues 270 to 273 (HARE), Arg-328, and 345 to 346 (DR) contribute to the substrate site. Cys-339 and Cys-362 are joined by a disulfide. N-linked (GlcNAc...) asparagine glycosylation occurs at Asn-386. A Zn(2+)-binding site is contributed by His-402. 403–404 (SY) is a binding site for substrate.

It belongs to the peptidase M14 family. Requires Zn(2+) as cofactor.

It is found in the vacuole. The protein resides in the secreted. Its function is as follows. Inactive carboxypeptidase that may play a role in cell wall organization and biogenesis. This Talaromyces marneffei (strain ATCC 18224 / CBS 334.59 / QM 7333) (Penicillium marneffei) protein is Inactive metallocarboxypeptidase ecm14 (ecm14).